A 380-amino-acid polypeptide reads, in one-letter code: Tryptophan 2,3-dioxygenase (380 aa).

Substrate is bound by residues Phe-57–His-61 and Arg-128. His-313 contacts heme. Residue Thr-328 participates in substrate binding.

This sequence belongs to the tryptophan 2,3-dioxygenase family. In terms of assembly, homotetramer. Dimer of dimers. It depends on heme as a cofactor.

The enzyme catalyses L-tryptophan + O2 = N-formyl-L-kynurenine. It functions in the pathway amino-acid degradation; L-tryptophan degradation via kynurenine pathway; L-kynurenine from L-tryptophan: step 1/2. The protein operates within pigment biosynthesis; ommochrome biosynthesis. Its function is as follows. Heme-dependent dioxygenase that catalyzes the oxidative cleavage of the L-tryptophan (L-Trp) pyrrole ring and converts L-tryptophan to N-formyl-L-kynurenine. Catalyzes the oxidative cleavage of the indole moiety. This Drosophila persimilis (Fruit fly) protein is Tryptophan 2,3-dioxygenase.